We begin with the raw amino-acid sequence, 2995 residues long: Striated muscle preferentially expressed protein kinase (2995 aa).

One can recognise an Ig-like 1 domain in the interval 27–109 (PPVFLRKLKW…GEARTSAVLA (83 aa)). Cys-50 and Cys-93 form a disulfide bridge. Disordered stretches follow at residues 250–272 (ITGS…KVSQ) and 384–467 (LTQT…NSKP). Residues 384–404 (LTQTDKQSSVSTESVPTQVIQ) are compositionally biased toward polar residues. A compositionally biased stretch (low complexity) spans 454-464 (PPEMNENQENN). Ig-like domains follow at residues 613–701 (PAES…EELI) and 714–802 (PLFT…AELY). Cys-639 and Cys-691 are disulfide-bonded. Positions 815-834 (SRLEKMPSIPEEPEVPEGEV) are disordered. The region spanning 840–930 (PDFIKPLSDL…AACYAHLYVA (91 aa)) is the Ig-like 4 domain. Cys-861 and Cys-912 form a disulfide bridge. The Fibronectin type-III 1 domain maps to 937–1035 (PDGPPVIESV…TDLVQLVDRG (99 aa)). Residues 1135 to 1224 (PPIFETIMED…GSVSCKAELT (90 aa)) enclose the Ig-like 5 domain. The Protein kinase 1 domain occupies 1255–1505 (YDIHKEIGRG…ATECLLHPWF (251 aa)). Residues 1261-1269 (IGRGAFSYV) and Lys-1283 contribute to the ATP site. The Proton acceptor role is filled by Asp-1372. 6 disordered regions span residues 1559 to 1582 (VPRN…DIDE), 1776 to 1839 (RNFR…STGD), 2017 to 2058 (LKRL…TGLK), 2163 to 2189 (VHSR…VEKQ), 2211 to 2254 (SGIS…KMDI), and 2268 to 2322 (SKET…KEDF). Positions 1786–1795 (SGDSGTFNND) are enriched in polar residues. A compositionally biased stretch (low complexity) spans 2274-2284 (SSSSAHSIESS). A compositionally biased stretch (basic and acidic residues) spans 2289-2299 (TEIRSRWDRWG). In terms of domain architecture, Ig-like 6 spans 2323 to 2413 (PPVFHIALKD…ASVTTSCILT (91 aa)). Cys-2345 and Cys-2397 form a disulfide bridge. Positions 2420–2513 (CPGTPEIRQI…DGVSIDTKVT (94 aa)) constitute a Fibronectin type-III 2 domain. Disordered stretches follow at residues 2574–2609 (PKMS…YTAP) and 2648–2676 (GEGA…LRQG). 2 stretches are compositionally biased toward polar residues: residues 2587–2605 (SSVN…SPRS) and 2652–2674 (SSPT…TTLR). The Protein kinase 2 domain occupies 2682–2934 (YSFLDEKARG…IKDCLNHSWL (253 aa)). ATP-binding positions include 2688–2696 (KARGRFGVI) and Lys-2711. Asp-2801 serves as the catalytic Proton acceptor.

This sequence belongs to the protein kinase superfamily. CAMK Ser/Thr protein kinase family. In terms of processing, may be autophosphorylated. Preferentially expressed in striated muscle.

The protein resides in the nucleus. The catalysed reaction is L-seryl-[protein] + ATP = O-phospho-L-seryl-[protein] + ADP + H(+). The enzyme catalyses L-threonyl-[protein] + ATP = O-phospho-L-threonyl-[protein] + ADP + H(+). The chain is Striated muscle preferentially expressed protein kinase (speg) from Danio rerio (Zebrafish).